A 153-amino-acid chain; its full sequence is uncharacterized protein (153 aa).

The tract at residues isoleucine 17–asparagine 78 is disordered. Positions proline 22 to proline 38 are enriched in basic residues.

This is an uncharacterized protein from Saccharomyces cerevisiae (strain ATCC 204508 / S288c) (Baker's yeast).